A 132-amino-acid chain; its full sequence is ATP synthase epsilon chain (132 aa).

Belongs to the ATPase epsilon chain family. F-type ATPases have 2 components, CF(1) - the catalytic core - and CF(0) - the membrane proton channel. CF(1) has five subunits: alpha(3), beta(3), gamma(1), delta(1), epsilon(1). CF(0) has three main subunits: a, b and c.

It is found in the cell inner membrane. In terms of biological role, produces ATP from ADP in the presence of a proton gradient across the membrane. This Anaeromyxobacter dehalogenans (strain 2CP-C) protein is ATP synthase epsilon chain.